Reading from the N-terminus, the 825-residue chain is Exocyst complex component SEC10a (825 aa).

Residues 244–266 (RGLEVAVANLQDYCNELENRLLS) adopt a coiled-coil conformation.

Belongs to the SEC10 family. The exocyst complex is composed of SEC3, SEC5, SEC6, SEC8, SEC10, EXO70A1 and EXO84B. Interacts with EXO84B. Binds to EXO70E2. Binds directly to B1L. Expressed in seedlings, roots, leaves and flowers.

Its subcellular location is the cytoplasm. The protein resides in the cytosol. It localises to the secreted. It is found in the extracellular exosome. Its function is as follows. Component of the exocyst complex involved in the docking of exocytic vesicles with fusion sites on the plasma membrane during regulated or polarized secretion. Involved in polarized cell growth and organ morphogenesis. During cytokinesis, involved in cell plate initiation, cell plate maturation and formation of new primary cell wall. The polypeptide is Exocyst complex component SEC10a (Arabidopsis thaliana (Mouse-ear cress)).